A 642-amino-acid chain; its full sequence is Capsid vertex component 2 (642 aa).

The segment at 1-48 is interaction with major capsid protein/MCP; sequence MSLLHTFWRLPVAVFFEPHEENVLRCPERVLRRLLEDAAVTMRGGGWR. Positions 97 to 125 are disordered; that stretch reads DEGPSPRTLLQPPCRPRSSSPGTGVAGAS.

It belongs to the herpesviridae CVC2 protein family. Heterodimerizes with CVC1. Interacts with major capsid protein/MCP and triplex capsid protein 1/TRX1 at the pentamer vertices. Interacts with the large tegument protein/LTP.

Its subcellular location is the virion. It is found in the host nucleus. In terms of biological role, capsid vertex-specific component that plays a role during viral DNA encapsidation, assuring correct genome cleavage and presumably stabilizing capsids that contain full-length viral genomes. Participates in the interaction between the capsid and the tegument through interaction with the large tegument protein/LTP. In Homo sapiens (Human), this protein is Capsid vertex component 2.